The sequence spans 385 residues: Transcription termination factor 2, mitochondrial (385 aa).

The N-terminal 35 residues, 1 to 35 (MLWKLLLRSQSCRLCSFRKMRSPPKYRPFLACFTY), are a transit peptide targeting the mitochondrion.

This sequence belongs to the mTERF family. Monomer. Expressed in skeletal muscle, heart, liver and pancreas.

It is found in the mitochondrion. The protein resides in the mitochondrion matrix. The protein localises to the mitochondrion nucleoid. Its function is as follows. Binds mitochondrial DNA and plays a role in the regulation of transcription of mitochondrial mRNA and rRNA species. The chain is Transcription termination factor 2, mitochondrial (MTERF2) from Homo sapiens (Human).